The chain runs to 229 residues: Enolase-phosphatase E1 (229 aa).

It belongs to the HAD-like hydrolase superfamily. MasA/MtnC family. As to quaternary structure, monomer. Requires Mg(2+) as cofactor.

It carries out the reaction 5-methylsulfanyl-2,3-dioxopentyl phosphate + H2O = 1,2-dihydroxy-5-(methylsulfanyl)pent-1-en-3-one + phosphate. It functions in the pathway amino-acid biosynthesis; L-methionine biosynthesis via salvage pathway; L-methionine from S-methyl-5-thio-alpha-D-ribose 1-phosphate: step 3/6. Its pathway is amino-acid biosynthesis; L-methionine biosynthesis via salvage pathway; L-methionine from S-methyl-5-thio-alpha-D-ribose 1-phosphate: step 4/6. Functionally, bifunctional enzyme that catalyzes the enolization of 2,3-diketo-5-methylthiopentyl-1-phosphate (DK-MTP-1-P) into the intermediate 2-hydroxy-3-keto-5-methylthiopentenyl-1-phosphate (HK-MTPenyl-1-P), which is then dephosphorylated to form the acireductone 1,2-dihydroxy-3-keto-5-methylthiopentene (DHK-MTPene). In Yersinia enterocolitica serotype O:8 / biotype 1B (strain NCTC 13174 / 8081), this protein is Enolase-phosphatase E1.